A 664-amino-acid chain; its full sequence is DNA ligase (664 aa).

NAD(+)-binding positions include 32–36 (DAEYD), 81–82 (SL), and Glu-113. The N6-AMP-lysine intermediate role is filled by Lys-115. Arg-136, Glu-173, Lys-289, and Lys-313 together coordinate NAD(+). Zn(2+) is bound by residues Cys-407, Cys-410, Cys-425, and Cys-431. The region spanning 586–664 (ASEQPFAGKT…EEQLQAALQS (79 aa)) is the BRCT domain.

The protein belongs to the NAD-dependent DNA ligase family. LigA subfamily. Mg(2+) is required as a cofactor. The cofactor is Mn(2+).

The catalysed reaction is NAD(+) + (deoxyribonucleotide)n-3'-hydroxyl + 5'-phospho-(deoxyribonucleotide)m = (deoxyribonucleotide)n+m + AMP + beta-nicotinamide D-nucleotide.. In terms of biological role, DNA ligase that catalyzes the formation of phosphodiester linkages between 5'-phosphoryl and 3'-hydroxyl groups in double-stranded DNA using NAD as a coenzyme and as the energy source for the reaction. It is essential for DNA replication and repair of damaged DNA. The chain is DNA ligase from Aeromonas salmonicida (strain A449).